The sequence spans 354 residues: Rhodopsin (354 aa).

Residues 1 to 36 are Extracellular-facing; sequence MNGTEGPYFNVPMVNTTGIVRSPYEYPQYYLVSPAA. 2 N-linked (GlcNAc...) asparagine glycosylation sites follow: Asn2 and Asn15. The helical transmembrane segment at 37–61 threads the bilayer; the sequence is YAALGAYMFFLILVGFPINFLTLYV. Topologically, residues 62–73 are cytoplasmic; sequence TLEHKKLRTPLN. A helical transmembrane segment spans residues 74–96; the sequence is YILLNLAVADLFMVFGGFTTTMY. Residues 97–110 lie on the Extracellular side of the membrane; the sequence is TSMHGYFVLGRLGC. Cys110 and Cys187 are disulfide-bonded. A helical transmembrane segment spans residues 111-133; sequence NLEGFFATLGGEIGLWSLVVLAI. The 'Ionic lock' involved in activated form stabilization signature appears at 134-136; the sequence is ERW. At 134–152 the chain is on the cytoplasmic side; the sequence is ERWVVVCKPISNFRFGENH. The helical transmembrane segment at 153–173 threads the bilayer; it reads AIMGLVFTWIMAASCAVPPLV. At 174–202 the chain is on the extracellular side; sequence GWSRYIPEGMQCSCGVDYYTRAEGFNNES. Residues 203 to 224 traverse the membrane as a helical segment; sequence FVVYMFVCHFLIPLIVVFFCYG. Topologically, residues 225–252 are cytoplasmic; it reads RLLCAVKEAAAAQQESETTQRAEREVTR. The chain crosses the membrane as a helical span at residues 253 to 274; the sequence is MVVIMVIGFLVCWLPYASVAWY. Residues 275-286 lie on the Extracellular side of the membrane; the sequence is IFTNQGSEFGPL. The helical transmembrane segment at 287 to 308 threads the bilayer; the sequence is FMTIPAFFAKSSSIYNPAIYIC. N6-(retinylidene)lysine is present on Lys296. The Cytoplasmic portion of the chain corresponds to 309-354; sequence MNKQFRNCMITTLCCGKNPFEEEEGASTTASKTEASSVSSSSVSPA. 2 S-palmitoyl cysteine lipidation sites follow: Cys322 and Cys323. The tract at residues 332–354 is disordered; the sequence is EGASTTASKTEASSVSSSSVSPA. A compositionally biased stretch (low complexity) spans 334–354; that stretch reads ASTTASKTEASSVSSSSVSPA.

The protein belongs to the G-protein coupled receptor 1 family. Opsin subfamily. In terms of processing, phosphorylated on some or all of the serine and threonine residues present in the C-terminal region. Contains one covalently linked retinal chromophore.

Its subcellular location is the membrane. The protein resides in the cell projection. It localises to the cilium. It is found in the photoreceptor outer segment. Its function is as follows. Photoreceptor required for image-forming vision at low light intensity. While most salt water fish species use retinal as chromophore, most freshwater fish use 3-dehydroretinal, or a mixture of retinal and 3-dehydroretinal. Light-induced isomerization of 11-cis to all-trans retinal triggers a conformational change that activates signaling via G-proteins. Subsequent receptor phosphorylation mediates displacement of the bound G-protein alpha subunit by arrestin and terminates signaling. This is Rhodopsin (rho) from Oryzias latipes (Japanese rice fish).